A 2081-amino-acid polypeptide reads, in one-letter code: Non-reducing polyketide synthase terA (2081 aa).

Residues 85 to 190 (TLTLAFRIGV…ISLDIFAPFH (106 aa)) form an N-terminal acylcarrier protein transacylase (SAT) domain (SAT) region. The Ketosynthase family 3 (KS3) domain occupies 316 to 749 (AQKIAIVGMA…GGNTGLLLED (434 aa)). Active-site for beta-ketoacyl synthase activity residues include cysteine 488, histidine 623, and histidine 667. The segment at 849 to 1147 (LFTGQGSHYT…LTLPSLRKQE (299 aa)) is malonyl-CoA:ACP transacylase (MAT) domain. An N-terminal hotdog fold region spans residues 1230 to 1364 (QKVIKEDFGQ…CHVEYGDIKT (135 aa)). The PKS/mFAS DH domain occupies 1230 to 1539 (QKVIKEDFGQ…FKAIPRAVIN (310 aa)). Residues 1259–1536 (VTGHLVNGSA…GVKFKAIPRA (278 aa)) form a product template (PT) domain region. Histidine 1262 serves as the catalytic Proton acceptor; for dehydratase activity. The C-terminal hotdog fold stretch occupies residues 1392–1539 (YQKLDRKAAY…FKAIPRAVIN (148 aa)). The active-site Proton donor; for dehydratase activity is the aspartate 1452. Residues 1549-1578 (KALEKSAPRQNPKATATKTTQKPQAPVPVP) form a disordered region. Low complexity predominate over residues 1558-1572 (QNPKATATKTTQKPQ). The Carrier 1 domain occupies 1580 to 1658 (KQNKAIIDDF…QVKELILKLA (79 aa)). At serine 1617 the chain carries O-(pantetheine 4'-phosphoryl)serine. The interval 1659-1700 (GSSSDENTTDTPDEEEDPATADADNTEMIRENPLESVSPNVS) is disordered. Residues 1665–1677 (NTTDTPDEEEDPA) show a composition bias toward acidic residues. The 78-residue stretch at 1699–1776 (VSSSEAMDGF…QARLAIASLM (78 aa)) folds into the Carrier 2 domain. Position 1736 is an O-(pantetheine 4'-phosphoryl)serine (serine 1736). The disordered stretch occupies residues 1783–1809 (GATTPYSGSDDAKSSTSSLTAGSVLTP). Residues 1840–2070 (TLFLLPDGSG…TMMREPKVNQ (231 aa)) are thioesterase (TE) domain.

The catalysed reaction is 3 malonyl-CoA + acetyl-CoA + 2 H(+) = orsellinate + 3 CO2 + 4 CoA. The protein operates within secondary metabolite biosynthesis. Non-reducing polyketide synthase; part of the gene cluster that mediates the biosynthesis of terrein, a fungal metabolite with ecological, antimicrobial, antiproliferative, and antioxidative activities. The first step in the pathway is performed by the polyketide synthase terA that produces 4-hydroxy-6-methylpyranon (4-HMP), orsellinic acid (OA), and 2,3-dehydro-6-hydroxymellein (2,3-dehydro-6-HM) by condensing acetyl-CoA with two, three, or four malonyl-CoA units, respectively. 4-HMP and OA are not pathway intermediates, but are rather shunt or side products. 2,3-dehydro-6-HM is further converted to 6-hydroxymellein (6-HM) by the 6-hydroxymellein synthase terB. The monooxygenases terC and terD, the multicopper oxidase terE and the Kelch-like protein terF are then involved in the transformation of 6-HM to terrein. Even if they are co-regulated with the other terrein cluster genes, terH and terI seem to be dispensable for terrein production; whereas one or both of the 2 transporters terG and terJ are probably required for efficient secretion of metabolites. The chain is Non-reducing polyketide synthase terA from Aspergillus terreus (strain NIH 2624 / FGSC A1156).